Consider the following 212-residue polypeptide: 2-C-methyl-D-erythritol 4-phosphate cytidylyltransferase (212 aa).

The protein belongs to the IspD/TarI cytidylyltransferase family. IspD subfamily.

The catalysed reaction is 2-C-methyl-D-erythritol 4-phosphate + CTP + H(+) = 4-CDP-2-C-methyl-D-erythritol + diphosphate. The protein operates within isoprenoid biosynthesis; isopentenyl diphosphate biosynthesis via DXP pathway; isopentenyl diphosphate from 1-deoxy-D-xylulose 5-phosphate: step 2/6. In terms of biological role, catalyzes the formation of 4-diphosphocytidyl-2-C-methyl-D-erythritol from CTP and 2-C-methyl-D-erythritol 4-phosphate (MEP). The chain is 2-C-methyl-D-erythritol 4-phosphate cytidylyltransferase from Chlamydia felis (strain Fe/C-56) (Chlamydophila felis).